We begin with the raw amino-acid sequence, 294 residues long: MPVVTMRQLLNSGVHFGHQTRRWNPKMKRFILTERNGIYIIDLQQSLSYIDRAYEFVKATVAHGGTVLFVGTKKQAQEAIAEQSTRVGQPYVNHRWLGGMLTNFQTVAKRIQRMKELEEINFEDVASSGHTKKELLLLKRELTKLEGNLGGIRNLNKVPSTIWIVDTKKEHLAIDEAKKLNIPVVAILDTNCDPDEVDFPIPGNDDAIRSVNLLTRVIADAVAEGLIARNAKATGSAEGTAAEPLAEWERELLESSNTEAPVAETAAAEAPVADAAIEAPVAEEAKTTEADDTK.

The disordered stretch occupies residues 254–294 (ESSNTEAPVAETAAAEAPVADAAIEAPVAEEAKTTEADDTK). Over residues 259 to 282 (EAPVAETAAAEAPVADAAIEAPVA) the composition is skewed to low complexity. Positions 283–294 (EEAKTTEADDTK) are enriched in basic and acidic residues.

Belongs to the universal ribosomal protein uS2 family.

The polypeptide is Small ribosomal subunit protein uS2 (Renibacterium salmoninarum (strain ATCC 33209 / DSM 20767 / JCM 11484 / NBRC 15589 / NCIMB 2235)).